Consider the following 129-residue polypeptide: Glycine cleavage system H protein (129 aa).

The 82-residue stretch at 23-104 folds into the Lipoyl-binding domain; that stretch reads TATIGITQHA…AYAAWLFRLK (82 aa). The residue at position 64 (K64) is an N6-lipoyllysine.

It belongs to the GcvH family. In terms of assembly, the glycine cleavage system is composed of four proteins: P, T, L and H. It depends on (R)-lipoate as a cofactor.

In terms of biological role, the glycine cleavage system catalyzes the degradation of glycine. The H protein shuttles the methylamine group of glycine from the P protein to the T protein. This is Glycine cleavage system H protein from Nitrosospira multiformis (strain ATCC 25196 / NCIMB 11849 / C 71).